Here is a 107-residue protein sequence, read N- to C-terminus: MAYVIAEPCVATCDTACVPVCPVDCIHGPLAADEISRIPEGERKTRLAGLQLYIDPESCICCGACENECPVGAIFDEDELPAEWQRYREINARFFDDRAKERAPEET.

2 4Fe-4S ferredoxin-type domains span residues 1 to 31 (MAYVIAEPCVATCDTACVPVCPVDCIHGPLA) and 50 to 79 (LQLYIDPESCICCGACENECPVGAIFDEDE). [4Fe-4S] cluster contacts are provided by Cys9, Cys13, Cys17, Cys21, Cys59, Cys62, Cys65, and Cys69.

Requires [4Fe-4S] cluster as cofactor.

Functionally, ferredoxins are iron-sulfur proteins that transfer electrons in a wide variety of metabolic reactions. Fdx2 can receive electrons from both FdR_A and FdR_B ferredoxin reductases, with a preference for FdR_B compared with FdR_A, and transfer the electrons to the cytochrome P450 CYP260A1. The polypeptide is Ferredoxin Fdx8 (Sorangium cellulosum (strain So ce56) (Polyangium cellulosum (strain So ce56))).